The primary structure comprises 209 residues: High frequency lysogenization protein HflD homolog (209 aa).

A coiled-coil region spans residues leucine 95 to serine 132.

This sequence belongs to the HflD family.

Its subcellular location is the cytoplasm. The protein localises to the cell inner membrane. In Cronobacter sakazakii (strain ATCC BAA-894) (Enterobacter sakazakii), this protein is High frequency lysogenization protein HflD homolog.